The following is a 496-amino-acid chain: Chaperone SurA (496 aa).

An N-terminal signal peptide occupies residues 1 to 42; the sequence is MACKSTAVRSATRVAPTRRLGMVTGALVALMAGAALLPAAHA. Residues 53–80 are disordered; that stretch reads RGIFTTPDASPSQPLLRGTLPGPSTASG. PpiC domains are found at residues 235-337 and 349-447; these read VQEY…KLVD and VAQT…QVEG.

It is found in the periplasm. It catalyses the reaction [protein]-peptidylproline (omega=180) = [protein]-peptidylproline (omega=0). Functionally, chaperone involved in the correct folding and assembly of outer membrane proteins. Recognizes specific patterns of aromatic residues and the orientation of their side chains, which are found more frequently in integral outer membrane proteins. May act in both early periplasmic and late outer membrane-associated steps of protein maturation. The sequence is that of Chaperone SurA from Ralstonia nicotianae (strain ATCC BAA-1114 / GMI1000) (Ralstonia solanacearum).